Here is a 348-residue protein sequence, read N- to C-terminus: 3-isopropylmalate dehydrogenase (348 aa).

76–87 provides a ligand contact to NAD(+); it reads GPKWTDPNNRPE. The substrate site is built by R94, R104, R132, and D217. D217, D241, and D245 together coordinate Mg(2+). Residue 275 to 287 participates in NAD(+) binding; sequence GSAPDIAGKNVAN.

Belongs to the isocitrate and isopropylmalate dehydrogenases family. LeuB type 1 subfamily. As to quaternary structure, homodimer. The cofactor is Mg(2+). Mn(2+) serves as cofactor.

It is found in the cytoplasm. It carries out the reaction (2R,3S)-3-isopropylmalate + NAD(+) = 4-methyl-2-oxopentanoate + CO2 + NADH. It functions in the pathway amino-acid biosynthesis; L-leucine biosynthesis; L-leucine from 3-methyl-2-oxobutanoate: step 3/4. Functionally, catalyzes the oxidation of 3-carboxy-2-hydroxy-4-methylpentanoate (3-isopropylmalate) to 3-carboxy-4-methyl-2-oxopentanoate. The product decarboxylates to 4-methyl-2 oxopentanoate. This Staphylococcus aureus (strain MRSA252) protein is 3-isopropylmalate dehydrogenase.